The chain runs to 165 residues: SsrA-binding protein (165 aa).

The segment at 141 to 165 is disordered; it reads KLHDKRQEEKRKQADREVKSALARY. Residues 145 to 159 show a composition bias toward basic and acidic residues; sequence KRQEEKRKQADREVK.

The protein belongs to the SmpB family.

It localises to the cytoplasm. Required for rescue of stalled ribosomes mediated by trans-translation. Binds to transfer-messenger RNA (tmRNA), required for stable association of tmRNA with ribosomes. tmRNA and SmpB together mimic tRNA shape, replacing the anticodon stem-loop with SmpB. tmRNA is encoded by the ssrA gene; the 2 termini fold to resemble tRNA(Ala) and it encodes a 'tag peptide', a short internal open reading frame. During trans-translation Ala-aminoacylated tmRNA acts like a tRNA, entering the A-site of stalled ribosomes, displacing the stalled mRNA. The ribosome then switches to translate the ORF on the tmRNA; the nascent peptide is terminated with the 'tag peptide' encoded by the tmRNA and targeted for degradation. The ribosome is freed to recommence translation, which seems to be the essential function of trans-translation. This Prochlorococcus marinus (strain MIT 9303) protein is SsrA-binding protein.